The primary structure comprises 439 residues: Histidine--tRNA ligase (439 aa).

Belongs to the class-II aminoacyl-tRNA synthetase family. As to quaternary structure, homodimer.

The protein localises to the cytoplasm. It carries out the reaction tRNA(His) + L-histidine + ATP = L-histidyl-tRNA(His) + AMP + diphosphate + H(+). This chain is Histidine--tRNA ligase (hisS), found in Leptospira interrogans serogroup Icterohaemorrhagiae serovar Lai (strain 56601).